A 231-amino-acid chain; its full sequence is DNA mismatch repair protein MutH (231 aa).

Belongs to the MutH family.

It is found in the cytoplasm. Sequence-specific endonuclease that cleaves unmethylated GATC sequences. It is involved in DNA mismatch repair. The sequence is that of DNA mismatch repair protein MutH from Klebsiella pneumoniae subsp. pneumoniae (strain ATCC 700721 / MGH 78578).